We begin with the raw amino-acid sequence, 443 residues long: Methyl-coenzyme M reductase II subunit beta (443 aa).

Tyr367 provides a ligand contact to coenzyme M. Gly369 provides a ligand contact to coenzyme B.

It belongs to the methyl-coenzyme M reductase beta subunit family. As to quaternary structure, MCR is a hexamer of two alpha, two beta, and two gamma chains, forming a dimer of heterotrimers. Coenzyme F430 is required as a cofactor.

The enzyme catalyses coenzyme B + methyl-coenzyme M = methane + coenzyme M-coenzyme B heterodisulfide. The protein operates within one-carbon metabolism; methyl-coenzyme M reduction; methane from methyl-coenzyme M: step 1/1. Functionally, component of the methyl-coenzyme M reductase (MCR) I that catalyzes the reductive cleavage of methyl-coenzyme M (CoM-S-CH3 or 2-(methylthio)ethanesulfonate) using coenzyme B (CoB or 7-mercaptoheptanoylthreonine phosphate) as reductant which results in the production of methane and the mixed heterodisulfide of CoB and CoM (CoM-S-S-CoB). This is the final step in methanogenesis. This is Methyl-coenzyme M reductase II subunit beta from Methanothermobacter marburgensis (strain ATCC BAA-927 / DSM 2133 / JCM 14651 / NBRC 100331 / OCM 82 / Marburg) (Methanobacterium thermoautotrophicum).